The sequence spans 928 residues: Chromatin structure-remodeling complex subunit RSC1 (928 aa).

2 consecutive Bromo domains span residues 4–112 (QDNG…IVHN) and 240–342 (RIKN…VRIE). A BAH domain is found at 368-486 (EKYQIGDWVL…ESDKVFNKIR (119 aa)). 4 disordered regions span residues 558 to 586 (DDLG…GKID), 598 to 635 (TTSS…NTPL), 657 to 701 (HNLL…KPAS), and 871 to 908 (IASG…TTSA). Residues 600 to 620 (SSMPRVNSSSTIRLPTLKQTK) are compositionally biased toward polar residues. A compositionally biased stretch (low complexity) spans 621–631 (SIPSSNFRSSS). Positions 667-679 (KFQSPSLLEQSSR) are enriched in polar residues. S670 carries the post-translational modification Phosphoserine. Positions 692-701 (SSTAPKKPAS) are enriched in low complexity. The span at 883-902 (TAEESEDENEDTEDEHEIED) shows a compositional bias: acidic residues.

It belongs to the RSC1 family. In terms of assembly, component of the two forms of the RSC complex composed of at least either RSC1 or RSC2, and ARP7, ARP9, LDB7, NPL6, RSC3, RSC30, RSC4, RSC58, RSC6, RSC8, RSC9, SFH1, STH1, HTL1 and probably RTT102. The complexes interact with histone and histone variant components of centromeric chromatin.

The protein localises to the nucleus. Component of the chromatin structure remodeling complex (RSC), which is involved in transcription regulation and nucleosome positioning. RSC is responsible for the transfer of a histone octamer from a nucleosome core particle to naked DNA. The reaction requires ATP and involves an activated RSC-nucleosome intermediate. Remodeling reaction also involves DNA translocation, DNA twist and conformational change. As a reconfigurer of centromeric and flanking nucleosomes, RSC complex is required both for proper kinetochore function in chromosome segregation and, via a PKC1-dependent signaling pathway, for organization of the cellular cytoskeleton. This subunit is involved in meiotic sporulation through regulating IME2 expression. The sequence is that of Chromatin structure-remodeling complex subunit RSC1 (RSC1) from Saccharomyces cerevisiae (strain ATCC 204508 / S288c) (Baker's yeast).